Reading from the N-terminus, the 679-residue chain is DNA ligase (679 aa).

Residues 32–36 (DTLYD), 81–82 (SL), and Glu-115 contribute to the NAD(+) site. The active-site N6-AMP-lysine intermediate is Lys-117. Residues Arg-138, Glu-175, Lys-293, and Lys-317 each contribute to the NAD(+) site. Residues Cys-411, Cys-414, Cys-429, and Cys-434 each coordinate Zn(2+). The BRCT domain maps to 601–679 (NSSGALLGKT…EAELQKLLST (79 aa)).

The protein belongs to the NAD-dependent DNA ligase family. LigA subfamily. The cofactor is Mg(2+). Requires Mn(2+) as cofactor.

The catalysed reaction is NAD(+) + (deoxyribonucleotide)n-3'-hydroxyl + 5'-phospho-(deoxyribonucleotide)m = (deoxyribonucleotide)n+m + AMP + beta-nicotinamide D-nucleotide.. Functionally, DNA ligase that catalyzes the formation of phosphodiester linkages between 5'-phosphoryl and 3'-hydroxyl groups in double-stranded DNA using NAD as a coenzyme and as the energy source for the reaction. It is essential for DNA replication and repair of damaged DNA. The protein is DNA ligase of Parasynechococcus marenigrum (strain WH8102).